The sequence spans 435 residues: GTPase Obg (435 aa).

The region spanning 6–164 is the Obg domain; that stretch reads ADFVDRVKIF…RWLELELKIL (159 aa). In terms of domain architecture, OBG-type G spans 165-335; that stretch reads ADVGLVGYPN…LVSKLASIVR (171 aa). GTP contacts are provided by residues 171-178, 196-200, 217-220, 287-290, and 316-318; these read GYPNVGKS, FTTLI, DIPG, NKID, and SAV. Ser-178 and Thr-198 together coordinate Mg(2+). In terms of domain architecture, OCT spans 357 to 435; that stretch reads RRLPEKFHLE…IGDFEFEYRE (79 aa).

The protein belongs to the TRAFAC class OBG-HflX-like GTPase superfamily. OBG GTPase family. Monomer. It depends on Mg(2+) as a cofactor.

Its subcellular location is the cytoplasm. An essential GTPase which binds GTP, GDP and possibly (p)ppGpp with moderate affinity, with high nucleotide exchange rates and a fairly low GTP hydrolysis rate. Plays a role in control of the cell cycle, stress response, ribosome biogenesis and in those bacteria that undergo differentiation, in morphogenesis control. This chain is GTPase Obg, found in Thermotoga maritima (strain ATCC 43589 / DSM 3109 / JCM 10099 / NBRC 100826 / MSB8).